A 510-amino-acid polypeptide reads, in one-letter code: Inositol-3-phosphate synthase (510 aa).

Residues Gly-70, Gly-71, Asn-72, Asn-73, Asp-143, Ile-180, Gln-190, Arg-193, Thr-230, Ala-231, Asn-232, Thr-233, Gly-281, Ser-282, Asp-306, Ser-309, Asn-340, Asn-341, Asp-342, Lys-355, Gly-393, Asp-394, Asp-422, and Ser-423 each coordinate NAD(+).

It belongs to the myo-inositol 1-phosphate synthase family. NAD(+) serves as cofactor.

It is found in the cytoplasm. The protein resides in the cytosol. The protein localises to the nucleus. It catalyses the reaction D-glucose 6-phosphate = 1D-myo-inositol 3-phosphate. It functions in the pathway polyol metabolism; myo-inositol biosynthesis; myo-inositol from D-glucose 6-phosphate: step 1/2. Key enzyme in myo-inositol biosynthesis pathway that catalyzes the conversion of glucose 6-phosphate to 1-myo-inositol 1-phosphate in a NAD-dependent manner. The chain is Inositol-3-phosphate synthase from Nicotiana tabacum (Common tobacco).